The primary structure comprises 481 residues: Serine/threonine-protein kinase US3 (481 aa).

The interval glycine 12–glutamate 63 is disordered. The region spanning phenylalanine 191–phenylalanine 478 is the Protein kinase domain. ATP contacts are provided by residues leucine 197–valine 205 and lysine 220. Residue aspartate 305 is the Proton acceptor of the active site.

This sequence belongs to the protein kinase superfamily. Ser/Thr protein kinase family. Interacts with host LAT; this interaction prevents LAT activation of TRAF6. Post-translationally, phosphorylated by UL13; this phosphorylation regulates subsequent phosphorylation of UL31 and UL34 by US3. Autophosphorylated.

The protein localises to the host cytoplasm. It localises to the host nucleus. It catalyses the reaction L-seryl-[protein] + ATP = O-phospho-L-seryl-[protein] + ADP + H(+). The enzyme catalyses L-threonyl-[protein] + ATP = O-phospho-L-threonyl-[protein] + ADP + H(+). In terms of biological role, multifunctional serine/threonine kinase that plays a role in several processes including egress of virus particles from the nucleus, modulation of the actin cytoskeleton and inhibition of host immune response. Phosphorylates UL31 and UL34, two critical regulators of capsid budding from nucleus to endoplasmic reticulum, thereby facilitating virion egress. Modulates and redistributes host components of the nuclear envelope, including LMNA, emerin/EMD and the nuclear matrix protein MATR3. In turn, facilitates nuclear pore impairment and capsid release through impaired nuclear envelope. Phosphorylates envelope glycoprotein B (gB), probably to direct it to the cell surface. Promotes virus intracellular spread by restructuring host cell cytoskeleton. Blocks host apoptosis to extend cell survival and allow efficient viral replication. Promotes viral gene expression by phosphorylating host HDAC2 to reduce viral genome silencing. Strongly inhibits TCR-activated signal transduction in T-cells by reducing the ubiquitination of LAT and TRAF6, leading to a suboptimal activation of LAT. Subverts host antiviral innate immunity by inhibiting type I interferon production through hyperphosphorylation of beta-catenin/CTNNB1. In addition, phosphorylates the RNA sensor RIGI and the transcription factor IRF3 to prevent the RLR-mediated antiviral signaling pathway. Hyperphosphorylates host RELA and thereby dampens NF-kappa-B signaling. Acts as an immunoevasin partly responsible for inhibition of MR1 expression and antigen presentation in response to bacterial infection. This is Serine/threonine-protein kinase US3 (US3) from Human herpesvirus 1 (strain 17) (HHV-1).